A 720-amino-acid polypeptide reads, in one-letter code: Photosystem I P700 chlorophyll a apoprotein A1 (720 aa).

A run of 8 helical transmembrane segments spans residues 62 to 85 (IFSAHFGQLAIIFIWLSGMYFHGA), 148 to 171 (LYCTAIGGLIFAALMLFAGWFHYH), 186 to 210 (LNHHLAGLLGLGSLSWAGHQVHVSL), 282 to 300 (IVHHHLAIAVIFLIAGHMY), 337 to 360 (WHAQLALNLAILGSLTIVVAHHMY), 376 to 402 (LSLFTHHMWIGGFVIIGAAAHAAIFLV), 424 to 446 (AIISHLNWTCIFLGFHSFGLYIH), and 522 to 540 (FLVHHIHAFTIHVTVLILL). The [4Fe-4S] cluster site is built by cysteine 564 and cysteine 573. 2 helical membrane passes run 580-601 (HVFLGLFWMYNAISVVIFHFSW) and 655-677 (LSAYGLFFLGAHFVWAFSLMFLF). Histidine 666 contacts chlorophyll a'. Residues methionine 674 and tyrosine 682 each coordinate chlorophyll a. Tryptophan 683 contacts phylloquinone. A helical transmembrane segment spans residues 715 to 720 (AVGVAH).

Belongs to the PsaA/PsaB family. In terms of assembly, the PsaA/B heterodimer binds the P700 chlorophyll special pair and subsequent electron acceptors. PSI consists of a core antenna complex that captures photons, and an electron transfer chain that converts photonic excitation into a charge separation. The eukaryotic PSI reaction center is composed of at least 11 subunits. The cofactor is P700 is a chlorophyll a/chlorophyll a' dimer, A0 is one or more chlorophyll a, A1 is one or both phylloquinones and FX is a shared 4Fe-4S iron-sulfur center..

It localises to the plastid. Its subcellular location is the chloroplast thylakoid membrane. The catalysed reaction is reduced [plastocyanin] + hnu + oxidized [2Fe-2S]-[ferredoxin] = oxidized [plastocyanin] + reduced [2Fe-2S]-[ferredoxin]. PsaA and PsaB bind P700, the primary electron donor of photosystem I (PSI), as well as the electron acceptors A0, A1 and FX. PSI is a plastocyanin-ferredoxin oxidoreductase, converting photonic excitation into a charge separation, which transfers an electron from the donor P700 chlorophyll pair to the spectroscopically characterized acceptors A0, A1, FX, FA and FB in turn. Oxidized P700 is reduced on the lumenal side of the thylakoid membrane by plastocyanin. This is Photosystem I P700 chlorophyll a apoprotein A1 from Ephedra tweediana (Vining horsetail).